The following is a 24-amino-acid chain: Fraternine (24 aa).

An intrachain disulfide couples C11 to C24. C24 carries the cysteine amide modification.

In terms of tissue distribution, expressed by the venom gland.

It localises to the secreted. Wasp venom peptide that acts as a potent mast cell degranulating peptide without hemolytic activity. Shows neuroprotective effect, since it prevents the death of dopaminergic neurons of the brain substantia nigra region and recovers motor deficit in a 6-hydroxydopamine (6-OHDA)-induced murine model of Parkinson disease. In Parachartergus fraternus (Artistic wasp), this protein is Fraternine.